The chain runs to 203 residues: Pyridoxal 5'-phosphate synthase subunit PdxT (203 aa).

54 to 56 (GES) serves as a coordination point for L-glutamine. Cys-86 functions as the Nucleophile in the catalytic mechanism. L-glutamine contacts are provided by residues Arg-113 and 141-142 (IR). Active-site charge relay system residues include His-177 and Glu-179.

Belongs to the glutaminase PdxT/SNO family. In terms of assembly, in the presence of PdxS, forms a dodecamer of heterodimers. Only shows activity in the heterodimer.

The enzyme catalyses aldehydo-D-ribose 5-phosphate + D-glyceraldehyde 3-phosphate + L-glutamine = pyridoxal 5'-phosphate + L-glutamate + phosphate + 3 H2O + H(+). It carries out the reaction L-glutamine + H2O = L-glutamate + NH4(+). The protein operates within cofactor biosynthesis; pyridoxal 5'-phosphate biosynthesis. Functionally, catalyzes the hydrolysis of glutamine to glutamate and ammonia as part of the biosynthesis of pyridoxal 5'-phosphate. The resulting ammonia molecule is channeled to the active site of PdxS. This Halobacterium salinarum (strain ATCC 29341 / DSM 671 / R1) protein is Pyridoxal 5'-phosphate synthase subunit PdxT.